The following is a 148-amino-acid chain: UPF0540 protein At1g62000 (148 aa).

Residues 1–21 (MNATKFVVLLVIGILCAIVTA) form the signal peptide. The segment covering 123 to 132 (RANGKVASAS) has biased composition (low complexity). The tract at residues 123–148 (RANGKVASASRVKGSSEKKKGKGKKD) is disordered.

This sequence belongs to the UPF0540 family.

This Arabidopsis thaliana (Mouse-ear cress) protein is UPF0540 protein At1g62000.